The chain runs to 145 residues: Superoxide dismutase [Mn/Fe] (145 aa).

Fe(3+)-binding residues include His-10 and His-64. Positions 10 and 64 each coordinate Mn(2+).

This sequence belongs to the iron/manganese superoxide dismutase family. Mn(2+) serves as cofactor. Fe(3+) is required as a cofactor.

It carries out the reaction 2 superoxide + 2 H(+) = H2O2 + O2. Destroys superoxide anion radicals which are normally produced within the cells and which are toxic to biological systems. Catalyzes the dismutation of superoxide anion radicals into O2 and H2O2 by successive reduction and oxidation of the transition metal ion at the active site. This chain is Superoxide dismutase [Mn/Fe] (sodA), found in Streptococcus iniae (Streptococcus shiloi).